The sequence spans 212 residues: Leucyl/phenylalanyl-tRNA--protein transferase (212 aa).

The protein belongs to the L/F-transferase family.

The protein localises to the cytoplasm. It catalyses the reaction N-terminal L-lysyl-[protein] + L-leucyl-tRNA(Leu) = N-terminal L-leucyl-L-lysyl-[protein] + tRNA(Leu) + H(+). The enzyme catalyses N-terminal L-arginyl-[protein] + L-leucyl-tRNA(Leu) = N-terminal L-leucyl-L-arginyl-[protein] + tRNA(Leu) + H(+). It carries out the reaction L-phenylalanyl-tRNA(Phe) + an N-terminal L-alpha-aminoacyl-[protein] = an N-terminal L-phenylalanyl-L-alpha-aminoacyl-[protein] + tRNA(Phe). Functionally, functions in the N-end rule pathway of protein degradation where it conjugates Leu, Phe and, less efficiently, Met from aminoacyl-tRNAs to the N-termini of proteins containing an N-terminal arginine or lysine. The polypeptide is Leucyl/phenylalanyl-tRNA--protein transferase (Allorhizobium ampelinum (strain ATCC BAA-846 / DSM 112012 / S4) (Agrobacterium vitis (strain S4))).